We begin with the raw amino-acid sequence, 471 residues long: 3-isopropylmalate dehydratase large subunit (471 aa).

[4Fe-4S] cluster is bound by residues C349, C409, and C412.

This sequence belongs to the aconitase/IPM isomerase family. LeuC type 1 subfamily. As to quaternary structure, heterodimer of LeuC and LeuD. It depends on [4Fe-4S] cluster as a cofactor.

The catalysed reaction is (2R,3S)-3-isopropylmalate = (2S)-2-isopropylmalate. The protein operates within amino-acid biosynthesis; L-leucine biosynthesis; L-leucine from 3-methyl-2-oxobutanoate: step 2/4. Catalyzes the isomerization between 2-isopropylmalate and 3-isopropylmalate, via the formation of 2-isopropylmaleate. The polypeptide is 3-isopropylmalate dehydratase large subunit (Aliivibrio salmonicida (strain LFI1238) (Vibrio salmonicida (strain LFI1238))).